The primary structure comprises 430 residues: Aspartate aminotransferase, mitochondrial (430 aa).

Residues 1 to 29 (MALLHSGRVLSGVASAFHPGLAAAASARA) constitute a mitochondrion transit peptide. Thr48 is modified (phosphothreonine). N6-acetyllysine is present on Lys59. Substrate is bound at residue Gly65. Lys73 carries the post-translational modification N6-acetyllysine; alternate. Lys73 is modified (N6-succinyllysine; alternate). N6-acetyllysine is present on Lys82. Lys90 is subject to N6-acetyllysine; alternate. Position 90 is an N6-succinyllysine; alternate (Lys90). The residue at position 96 (Tyr96) is a 3'-nitrotyrosine; alternate. Tyr96 is modified (phosphotyrosine; alternate). N6-acetyllysine; alternate occurs at positions 107, 122, and 159. 3 positions are modified to N6-succinyllysine; alternate: Lys107, Lys122, and Lys159. Trp162 is a substrate binding site. The residue at position 185 (Lys185) is an N6-acetyllysine; alternate. N6-succinyllysine; alternate is present on Lys185. Asn215 provides a ligand contact to substrate. N6-succinyllysine is present on Lys227. The residue at position 234 (Lys234) is an N6-acetyllysine. Residues Lys279 and Lys296 each carry the N6-acetyllysine; alternate modification. Lys279 is modified (N6-(pyridoxal phosphate)lysine; alternate). The residue at position 296 (Lys296) is an N6-succinyllysine; alternate. At Lys302 the chain carries N6-acetyllysine. Position 309 is an N6-acetyllysine; alternate (Lys309). Position 309 is an N6-succinyllysine; alternate (Lys309). An Asymmetric dimethylarginine modification is found at Arg313. Residue Lys345 is modified to N6-acetyllysine. An N6-acetyllysine; alternate modification is found at Lys363. N6-succinyllysine; alternate is present on Lys363. Lys364 and Lys387 each carry N6-acetyllysine. An N6-acetyllysine; alternate mark is found at Lys396 and Lys404. Residues Lys396 and Lys404 each carry the N6-succinyllysine; alternate modification. Arg407 contributes to the substrate binding site.

It belongs to the class-I pyridoxal-phosphate-dependent aminotransferase family. As to quaternary structure, homodimer. Requires pyridoxal 5'-phosphate as cofactor.

The protein localises to the mitochondrion matrix. The protein resides in the cell membrane. The catalysed reaction is L-aspartate + 2-oxoglutarate = oxaloacetate + L-glutamate. The enzyme catalyses L-kynurenine + 2-oxoglutarate = kynurenate + L-glutamate + H2O. Functionally, catalyzes the irreversible transamination of the L-tryptophan metabolite L-kynurenine to form kynurenic acid (KA). As a member of the malate-aspartate shuttle, it has a key role in the intracellular NAD(H) redox balance. Is important for metabolite exchange between mitochondria and cytosol, and for amino acid metabolism. Facilitates cellular uptake of long-chain free fatty acids. The chain is Aspartate aminotransferase, mitochondrial (GOT2) from Sus scrofa (Pig).